We begin with the raw amino-acid sequence, 194 residues long: Outer surface 22 kDa lipoprotein (194 aa).

Positions 1–21 are cleaved as a signal peptide; the sequence is MYKNGFFKNYLSLFLIFLVIA. The N-palmitoyl cysteine moiety is linked to residue Cys22. A lipid anchor (S-diacylglycerol cysteine) is attached at Cys22.

Its subcellular location is the cell outer membrane. The chain is Outer surface 22 kDa lipoprotein (p22) from Borreliella burgdorferi (strain ZS7) (Borrelia burgdorferi).